A 103-amino-acid chain; its full sequence is Histone H4 (103 aa).

Position 6 is an N6-acetyl-N6-methyllysine; alternate (Lys-6). N6-methyllysine; alternate is present on residues Lys-6, Lys-9, and Lys-13. The residue at position 13 (Lys-13) is an N6-acetyl-N6-methyllysine; alternate. Residues 17-21 (KRHRK) mediate DNA binding. Lys-92 is modified (N6-glutaryllysine).

Belongs to the histone H4 family. As to quaternary structure, the nucleosome is a histone octamer containing two molecules each of H2A, H2B, H3 and H4 assembled in one H3-H4 heterotetramer and two H2A-H2B heterodimers. The octamer wraps approximately 147 bp of DNA. Post-translationally, glutarylation at Lys-92 (H4K91glu) destabilizes nucleosomes by promoting dissociation of the H2A-H2B dimers from nucleosomes.

The protein localises to the nucleus. The protein resides in the chromosome. Its function is as follows. Core component of nucleosome. Nucleosomes wrap and compact DNA into chromatin, limiting DNA accessibility to the cellular machineries which require DNA as a template. Histones thereby play a central role in transcription regulation, DNA repair, DNA replication and chromosomal stability. DNA accessibility is regulated via a complex set of post-translational modifications of histones, also called histone code, and nucleosome remodeling. The polypeptide is Histone H4 (H4.1) (Mortierella alpina (Oleaginous fungus)).